We begin with the raw amino-acid sequence, 764 residues long: 5-methyltetrahydropteroyltriglutamate--homocysteine methyltransferase (764 aa).

5-methyltetrahydropteroyltri-L-glutamate-binding positions include 16–19 (RELK) and Lys115. Residues 435–437 (IGS) and Glu488 each bind L-homocysteine. L-methionine contacts are provided by residues 435 to 437 (IGS) and Glu488. 5-methyltetrahydropteroyltri-L-glutamate is bound by residues 519–520 (RC) and Trp565. L-homocysteine is bound at residue Asp603. Position 603 (Asp603) interacts with L-methionine. Glu609 provides a ligand contact to 5-methyltetrahydropteroyltri-L-glutamate. His645, Cys647, and Glu669 together coordinate Zn(2+). His698 (proton donor) is an active-site residue. Residue Cys730 participates in Zn(2+) binding.

Belongs to the vitamin-B12 independent methionine synthase family. Zn(2+) is required as a cofactor.

It carries out the reaction 5-methyltetrahydropteroyltri-L-glutamate + L-homocysteine = tetrahydropteroyltri-L-glutamate + L-methionine. It functions in the pathway amino-acid biosynthesis; L-methionine biosynthesis via de novo pathway; L-methionine from L-homocysteine (MetE route): step 1/1. Functionally, catalyzes the transfer of a methyl group from 5-methyltetrahydrofolate to homocysteine resulting in methionine formation. This is 5-methyltetrahydropteroyltriglutamate--homocysteine methyltransferase from Burkholderia pseudomallei (strain 1106a).